Here is a 121-residue protein sequence, read N- to C-terminus: Putative viral protein-binding protein C1 (121 aa).

The interval 21 to 57 (PWDRTRGHPDVPWRNLTSSPTRPLAQPAGSCMPAEPS) is disordered.

As to quaternary structure, interacts with core protein of hepatitis B virus.

In Homo sapiens (Human), this protein is Putative viral protein-binding protein C1.